Here is a 456-residue protein sequence, read N- to C-terminus: uncharacterized protein (456 aa).

Positions 5-63 (LVKKGQQISLKIKRLGINGEGIGYYKKLIIFVPGALPKEEVTATITNVTPKFAEGTLQS) constitute a TRAM domain. [4Fe-4S] cluster is bound by residues C76, C82, C85, and C165. S-adenosyl-L-methionine contacts are provided by Q289, Y318, D339, and D387. C414 functions as the Nucleophile in the catalytic mechanism.

The protein belongs to the class I-like SAM-binding methyltransferase superfamily. RNA M5U methyltransferase family.

This is an uncharacterized protein from Enterococcus faecalis (strain ATCC 700802 / V583).